Here is a 25-residue protein sequence, read N- to C-terminus: Omega conotoxin-CVIF (25 aa).

Intrachain disulfides connect Cys1–Cys16, Cys8–Cys20, and Cys15–Cys25. At Cys25 the chain carries Cysteine amide.

Belongs to the conotoxin O1 superfamily. As to expression, expressed by the venom duct.

It is found in the secreted. In terms of biological role, omega-conotoxins act at presynaptic membranes, they bind and block voltage-gated calcium channels. This toxin blocks N-type calcium channels (Cav2.2/CACNA1B). It shows a higher potency when Cav2.2/CACNA1B is only expressed with the ancillary subunit CACNB3 (IC(50)=0.1 nM) than on Cav2.2/CACNA1B expressed with the ancillary subunits CACNA2D1 and CACNB3 (IC(50)=19.9 nM). The Cav2.2/CACNA1B block by this toxin is voltage-independent, whereas the recovery from toxin block is voltage-dependent. There is a low recovery at physiological membrane potential and a high recovery with hyperpolarized potential. This indicates that the toxin has a higher affinity for Cav2.2/CACNA1B in the inactivated state. It is noteworthy that ancillary subunits beta modulate recovery from this toxin block. Cav2.2/CACNA1B expressed with the ancillary subunit CACNB2a (isoform 2a) almost recover completely from this toxin block, whereas an expression with CACNB3 exhibits relatively weak recovery. Inhibition by this toxin of excitatory synaptic transmission is reversible. In vivo, when tested on rat model of persistent pain, this toxin blocks chronic pain behavior. The protein is Omega conotoxin-CVIF of Conus catus (Cat cone).